The chain runs to 75 residues: Exodeoxyribonuclease 7 small subunit (75 aa).

It belongs to the XseB family. As to quaternary structure, heterooligomer composed of large and small subunits.

It localises to the cytoplasm. The catalysed reaction is Exonucleolytic cleavage in either 5'- to 3'- or 3'- to 5'-direction to yield nucleoside 5'-phosphates.. Functionally, bidirectionally degrades single-stranded DNA into large acid-insoluble oligonucleotides, which are then degraded further into small acid-soluble oligonucleotides. The protein is Exodeoxyribonuclease 7 small subunit of Nostoc punctiforme (strain ATCC 29133 / PCC 73102).